Reading from the N-terminus, the 135-residue chain is ATP synthase epsilon chain (135 aa).

It belongs to the ATPase epsilon chain family. As to quaternary structure, F-type ATPases have 2 components, CF(1) - the catalytic core - and CF(0) - the membrane proton channel. CF(1) has five subunits: alpha(3), beta(3), gamma(1), delta(1), epsilon(1). CF(0) has three main subunits: a, b and c.

It localises to the cell inner membrane. Produces ATP from ADP in the presence of a proton gradient across the membrane. In Rhodopseudomonas palustris (strain BisB5), this protein is ATP synthase epsilon chain.